A 648-amino-acid chain; its full sequence is MVVVTKKTMKIQIHLLYSFLFLCFSTLTLSSEPRNPEVEALISIRNNLHDPHGALNNWDEFSVDPCSWAMITCSPDNLVIGLGAPSQSLSGGLSESIGNLTNLRQVSLQNNNISGKIPPELGFLPKLQTLDLSNNRFSGDIPVSIDQLSSLQYLRLNNNSLSGPFPASLSQIPHLSFLDLSYNNLSGPVPKFPARTFNVAGNPLICRSNPPEICSGSINASPLSVSLSSSSGRRSNRLAIALSVSLGSVVILVLALGSFCWYRKKQRRLLILNLNDKQEEGLQGLGNLRSFTFRELHVYTDGFSSKNILGAGGFGNVYRGKLGDGTMVAVKRLKDINGTSGDSQFRMELEMISLAVHKNLLRLIGYCATSGERLLVYPYMPNGSVASKLKSKPALDWNMRKRIAIGAARGLLYLHEQCDPKIIHRDVKAANILLDECFEAVVGDFGLAKLLNHADSHVTTAVRGTVGHIAPEYLSTGQSSEKTDVFGFGILLLELITGLRALEFGKTVSQKGAMLEWVRKLHEEMKVEELLDRELGTNYDKIEVGEMLQVALLCTQYLPAHRPKMSEVVLMLEGDGLAERWAASHNHSHFYHANISFKTISSLSTTSVSRLDAHCNDPTYQMFGSSAFDDDDDHQPLDSFAMELSGPR.

An N-terminal signal peptide occupies residues 1–30 (MVVVTKKTMKIQIHLLYSFLFLCFSTLTLS). The Extracellular portion of the chain corresponds to 31 to 238 (SEPRNPEVEA…SSSGRRSNRL (208 aa)). N-linked (GlcNAc...) asparagine glycosylation is found at asparagine 99 and asparagine 112. LRR repeat units follow at residues 100–125 (LTNL…GFLP), 127–148 (LQTL…IDQL), 149–172 (SSLQ…LSQI), and 174–199 (HLSF…TFNV). 2 N-linked (GlcNAc...) asparagine glycosylation sites follow: asparagine 158 and asparagine 184. Residues 239–259 (AIALSVSLGSVVILVLALGSF) traverse the membrane as a helical segment. The Cytoplasmic segment spans residues 260-648 (CWYRKKQRRL…SFAMELSGPR (389 aa)). Threonine 300 carries the post-translational modification Phosphothreonine. The Protein kinase domain occupies 303 to 582 (FSSKNILGAG…EGDGLAERWA (280 aa)). 309 to 317 (LGAGGFGNV) lines the ATP pocket. Threonine 326 is modified (phosphothreonine). Lysine 331 lines the ATP pocket. A phosphoserine mark is found at serine 384 and serine 387. Aspartate 426 serves as the catalytic Proton acceptor. 3 positions are modified to phosphothreonine: threonine 459, threonine 460, and threonine 465. Tyrosine 473 is modified (phosphotyrosine). Residue serine 475 is modified to Phosphoserine. Threonine 476 carries the post-translational modification Phosphothreonine. The residue at position 480 (serine 480) is a Phosphoserine. The residue at position 555 (threonine 555) is a Phosphothreonine.

Belongs to the protein kinase superfamily. Ser/Thr protein kinase family.

It is found in the cell membrane. The catalysed reaction is L-seryl-[protein] + ATP = O-phospho-L-seryl-[protein] + ADP + H(+). The enzyme catalyses L-threonyl-[protein] + ATP = O-phospho-L-threonyl-[protein] + ADP + H(+). In Arabidopsis thaliana (Mouse-ear cress), this protein is Probable LRR receptor-like serine/threonine-protein kinase At4g30520.